The sequence spans 192 residues: Leucine-rich repeat-containing protein 51 (192 aa).

LRR repeat units follow at residues 49–71 (SLTQ…NQVA), 80–101 (NLAW…LTTF), and 103–124 (NLSV…NKLA). The LRRCT domain occupies 137-175 (NPMEEEKGYRQYVLCTLSRITTFDFSGVTKADRTTAEVW).

Its subcellular location is the cytoplasm. This Homo sapiens (Human) protein is Leucine-rich repeat-containing protein 51.